Here is a 461-residue protein sequence, read N- to C-terminus: Fumarate hydratase class II (461 aa).

Residues 97–99 (SGT), 127–130 (HPND), 137–139 (SSN), and T185 each bind substrate. H186 serves as the catalytic Proton donor/acceptor. The active site involves S316. Residues S317 and 322–324 (KVN) each bind substrate.

The protein belongs to the class-II fumarase/aspartase family. Fumarase subfamily. Homotetramer.

The protein localises to the cytoplasm. It catalyses the reaction (S)-malate = fumarate + H2O. It participates in carbohydrate metabolism; tricarboxylic acid cycle; (S)-malate from fumarate: step 1/1. Functionally, involved in the TCA cycle. Catalyzes the stereospecific interconversion of fumarate to L-malate. This chain is Fumarate hydratase class II, found in Staphylococcus epidermidis (strain ATCC 35984 / DSM 28319 / BCRC 17069 / CCUG 31568 / BM 3577 / RP62A).